The chain runs to 210 residues: Large ribosomal subunit protein uL3 (210 aa).

The tract at residues R125–P151 is disordered.

The protein belongs to the universal ribosomal protein uL3 family. In terms of assembly, part of the 50S ribosomal subunit. Forms a cluster with proteins L14 and L19.

Its function is as follows. One of the primary rRNA binding proteins, it binds directly near the 3'-end of the 23S rRNA, where it nucleates assembly of the 50S subunit. This chain is Large ribosomal subunit protein uL3, found in Bacillus mycoides (strain KBAB4) (Bacillus weihenstephanensis).